A 251-amino-acid chain; its full sequence is 3-deoxy-manno-octulosonate cytidylyltransferase (251 aa).

This sequence belongs to the KdsB family.

The protein resides in the cytoplasm. The catalysed reaction is 3-deoxy-alpha-D-manno-oct-2-ulosonate + CTP = CMP-3-deoxy-beta-D-manno-octulosonate + diphosphate. It functions in the pathway nucleotide-sugar biosynthesis; CMP-3-deoxy-D-manno-octulosonate biosynthesis; CMP-3-deoxy-D-manno-octulosonate from 3-deoxy-D-manno-octulosonate and CTP: step 1/1. Its pathway is bacterial outer membrane biogenesis; lipopolysaccharide biosynthesis. Functionally, activates KDO (a required 8-carbon sugar) for incorporation into bacterial lipopolysaccharide in Gram-negative bacteria. In Rhizobium etli (strain ATCC 51251 / DSM 11541 / JCM 21823 / NBRC 15573 / CFN 42), this protein is 3-deoxy-manno-octulosonate cytidylyltransferase.